Reading from the N-terminus, the 137-residue chain is Protein MesC (137 aa).

In Leuconostoc mesenteroides, this protein is Protein MesC (mesC).